A 61-amino-acid polypeptide reads, in one-letter code: Short neurotoxin 1 (61 aa).

Intrachain disulfides connect Cys3–Cys23, Cys17–Cys40, Cys42–Cys53, and Cys54–Cys59.

Belongs to the three-finger toxin family. Short-chain subfamily. Type I alpha-neurotoxin sub-subfamily. In terms of tissue distribution, expressed by the venom gland.

The protein resides in the secreted. Binds to muscle nicotinic acetylcholine receptor (nAChR) and inhibit acetylcholine from binding to the receptor, thereby impairing neuromuscular transmission. The sequence is that of Short neurotoxin 1 from Naja annulata annulata (Banded water cobra).